The chain runs to 642 residues: Threonine--tRNA ligase (642 aa).

Residues 1 to 61 enclose the TGS domain; sequence MPVITLPDGS…DTDSELSIIT (61 aa). Residues 243-534 are catalytic; it reads DHRKIGKQLD…LIEEYAGKFP (292 aa). The Zn(2+) site is built by cysteine 334, histidine 385, and histidine 511.

It belongs to the class-II aminoacyl-tRNA synthetase family. As to quaternary structure, homodimer. Zn(2+) serves as cofactor.

Its subcellular location is the cytoplasm. It carries out the reaction tRNA(Thr) + L-threonine + ATP = L-threonyl-tRNA(Thr) + AMP + diphosphate + H(+). In terms of biological role, catalyzes the attachment of threonine to tRNA(Thr) in a two-step reaction: L-threonine is first activated by ATP to form Thr-AMP and then transferred to the acceptor end of tRNA(Thr). Also edits incorrectly charged L-seryl-tRNA(Thr). The protein is Threonine--tRNA ligase of Shewanella sediminis (strain HAW-EB3).